Consider the following 384-residue polypeptide: Lipid-A-disaccharide synthase 1 (384 aa).

The protein belongs to the LpxB family.

The catalysed reaction is a lipid X + a UDP-2-N,3-O-bis[(3R)-3-hydroxyacyl]-alpha-D-glucosamine = a lipid A disaccharide + UDP + H(+). It participates in bacterial outer membrane biogenesis; LPS lipid A biosynthesis. Its function is as follows. Condensation of UDP-2,3-diacylglucosamine and 2,3-diacylglucosamine-1-phosphate to form lipid A disaccharide, a precursor of lipid A, a phosphorylated glycolipid that anchors the lipopolysaccharide to the outer membrane of the cell. The sequence is that of Lipid-A-disaccharide synthase 1 from Legionella pneumophila (strain Paris).